The sequence spans 575 residues: Acyloxyacyl hydrolase (575 aa).

The first 25 residues, M1–A25, serve as a signal peptide directing secretion. Positions H26–R34 are excised as a propeptide. Residues D36–P117 form the Saposin B-type domain. The interval H37 to C69 is important for enzyme activity, localization to cytoplasmic vesicles, and protein stability. 8 cysteine pairs are disulfide-bonded: C40/C113, C43/C107, C69/C82, C122/C453, C159/C168, C205/C229, C248/C328, and C375/C459. An N-linked (GlcNAc...) asparagine glycan is attached at N58. The lipopolysaccharide binding stretch occupies residues K172 to K176. Ca(2+) is bound by residues D183, D185, D187, Y189, D204, N206, D207, D209, V212, D222, D226, N228, N230, I232, and E244. N206 carries N-linked (GlcNAc...) asparagine glycosylation. S262 is an active-site residue. A glycan (N-linked (GlcNAc...) asparagine) is linked at N466.

Heterodimer of the large and small subunits; disulfide-linked. Ca(2+) serves as cofactor. In terms of processing, cleaved into a large and a small subunit. Post-translationally, the small subunit is N-glycosylated.

It localises to the secreted. Its subcellular location is the cytoplasmic vesicle. The catalysed reaction is a 3-(acyloxy)acyl derivative of bacterial toxin + H2O = a 3-hydroxyacyl derivative of bacterial toxin + a fatty acid + H(+). In terms of biological role, removes the secondary (acyloxyacyl-linked) fatty acyl chains from the lipid A region of bacterial lipopolysaccharides (LPS). By breaking down LPS, terminates the host response to bacterial infection and prevents prolonged and damaging inflammatory responses. In peritoneal macrophages, seems to be important for recovery from a state of immune tolerance following infection by Gram-negative bacteria. The chain is Acyloxyacyl hydrolase from Oryctolagus cuniculus (Rabbit).